A 270-amino-acid chain; its full sequence is ATP synthase subunit a (270 aa).

7 helical membrane-spanning segments follow: residues Val29–Val49, Ile87–Phe107, Pro108–Pro128, Asp140–Ile160, Pro182–Ala202, Leu220–Trp240, and Ala241–Val261.

It belongs to the ATPase A chain family. As to quaternary structure, F-type ATPases have 2 components, CF(1) - the catalytic core - and CF(0) - the membrane proton channel. CF(1) has five subunits: alpha(3), beta(3), gamma(1), delta(1), epsilon(1). CF(0) has three main subunits: a(1), b(2) and c(9-12). The alpha and beta chains form an alternating ring which encloses part of the gamma chain. CF(1) is attached to CF(0) by a central stalk formed by the gamma and epsilon chains, while a peripheral stalk is formed by the delta and b chains.

The protein localises to the cell inner membrane. Its function is as follows. Key component of the proton channel; it plays a direct role in the translocation of protons across the membrane. The polypeptide is ATP synthase subunit a (Chromobacterium violaceum (strain ATCC 12472 / DSM 30191 / JCM 1249 / CCUG 213 / NBRC 12614 / NCIMB 9131 / NCTC 9757 / MK)).